We begin with the raw amino-acid sequence, 744 residues long: Probable methylmalonyl-CoA mutase, mitochondrial (744 aa).

A B12-binding domain is found at 605–737 (QPRIMVAKMG…EKLEANLPEA (133 aa)). Adenosylcob(III)alamin is bound at residue His618.

The protein belongs to the methylmalonyl-CoA mutase family. In terms of assembly, homodimer. Requires adenosylcob(III)alamin as cofactor.

The protein localises to the mitochondrion matrix. It carries out the reaction (R)-methylmalonyl-CoA = succinyl-CoA. Involved, in man, in the degradation of several amino acids, odd-chain fatty acids and cholesterol via propionyl-CoA to the tricarboxylic acid cycle. MCM has different functions in other species. The chain is Probable methylmalonyl-CoA mutase, mitochondrial (mmcm-1) from Caenorhabditis elegans.